The chain runs to 342 residues: Prenyl transferase penC (342 aa).

A helical membrane pass occupies residues 17-37 (LSYLTLTVGALALVVVLYISI). H110 provides a ligand contact to isopentenyl diphosphate. D117 and D121 together coordinate Mg(2+). R126 provides a ligand contact to dimethylallyl diphosphate. A glycan (N-linked (GlcNAc...) asparagine) is linked at N154. Position 210 (K210) interacts with dimethylallyl diphosphate.

Belongs to the FPP/GGPP synthase family.

It is found in the membrane. It participates in secondary metabolite biosynthesis. Its function is as follows. Prenyl transferase; part of the gene cluster that mediates the biosynthesis of the indole diterpenes penitrems. The geranylgeranyl diphosphate (GGPP) synthase penG catalyzes the first step in penitrem biosynthesis via conversion of farnesyl pyrophosphate and isopentyl pyrophosphate into geranylgeranyl pyrophosphate (GGPP). Condensation of indole-3-glycerol phosphate with GGPP by the prenyl transferase penC then forms 3-geranylgeranylindole (3-GGI). Epoxidation by the FAD-dependent monooxygenase penM leads to a epoxidized-GGI that is substrate of the terpene cyclase penB for cyclization to yield paspaline. Paspaline is subsequently converted to 13-desoxypaxilline by the cytochrome P450 monooxygenase penP, the latter being then converted to paxilline by the cytochrome P450 monooxygenase penQ. Paxilline is converted to beta-paxitriol via C-10 ketoreduction by the short-chain dehydrogenase PC-15 which can be monoprenylated at the C-20 by the indole diterpene prenyltransferase penD. A two-step elimination (acetylation and elimination) process performed by the O-acetyltransferase PC-16 and the P.simplicissimum ptmI-ortholog not yet identified in P.crustosum, leads to the production of the prenylated form of penijanthine. The FAD-linked oxidoreductase ptmO then converts the prenylated form of penijanthine into PC-M5 which is in turn transformed into PC-M4 by the aromatic dimethylallyltransferase PC-22. A series of oxidation steps involving 4 cytochrome P450 monooxygenases (PC-21, PC-05, PC-23, PC-20) and a FAD-dependent monooxygenase (PC-14) are required for the transformation of PC-M4 to penitrems A and E. Synthesis of these final products is proposed to proceed via penitrems D and C (PC-21, PC-05, PC-14) and penitrems B and F (PC-21, PC-05, PC-14, PC-23). In Penicillium crustosum (Blue mold fungus), this protein is Prenyl transferase penC.